We begin with the raw amino-acid sequence, 288 residues long: MKLPIFIADAFTATAFRGNPAAVCLLERTLDEDAHQDIAREMNLSETAFVRKLQPTDDFTQSSRFGLRWFTPEAEFPLCGHATLASAAVLFQKRKNTNSTLTFVTMSGELKARREEDGIVLDFPVYPTFPQDFHEVEDLIKAAIGDTLVQDIRYSPDTKNLLVRLSDSYDRSFLESLKVNTEPLPAIEKTGKVRGLILTVKGEPGGQTALYDFYSRCFAPWVGVAEDPVTGSTHTLLGPYWSEELGKKEMRAFQCSRRGGELDINLRPDGRVDIKGGAVIVLEGTLTA.

Glu46 is a catalytic residue.

The protein belongs to the PhzF family.

The sequence is that of Phenazine biosynthesis-like domain-containing protein 2 (Pbld2) from Mus musculus (Mouse).